Reading from the N-terminus, the 89-residue chain is Small ribosomal subunit protein uS15 (89 aa).

The protein belongs to the universal ribosomal protein uS15 family. As to quaternary structure, part of the 30S ribosomal subunit. Forms a bridge to the 50S subunit in the 70S ribosome, contacting the 23S rRNA.

Its function is as follows. One of the primary rRNA binding proteins, it binds directly to 16S rRNA where it helps nucleate assembly of the platform of the 30S subunit by binding and bridging several RNA helices of the 16S rRNA. In terms of biological role, forms an intersubunit bridge (bridge B4) with the 23S rRNA of the 50S subunit in the ribosome. In Roseiflexus castenholzii (strain DSM 13941 / HLO8), this protein is Small ribosomal subunit protein uS15.